Consider the following 91-residue polypeptide: MAHKKAGGSSRNGRDSDGRRLGVKKFGGEAVIGGNIIVRQRGTKWHPGSNVGIGKDHTLFALTAGQVFFQTKANGRSYISVIPPKAAEAAE.

Positions 1–22 (MAHKKAGGSSRNGRDSDGRRLG) are disordered.

It belongs to the bacterial ribosomal protein bL27 family.

This is Large ribosomal subunit protein bL27 from Beijerinckia indica subsp. indica (strain ATCC 9039 / DSM 1715 / NCIMB 8712).